The primary structure comprises 631 residues: Probable potassium transport system protein Kup 1 (631 aa).

Transmembrane regions (helical) follow at residues 16–36 (LGLS…SPLY), 58–78 (VLSL…LVFV), 109–129 (VLVF…TLTP), 145–165 (PLFH…LFLI), 173–193 (VGAL…LLGI), 219–239 (GWSG…GEAL), 255–275 (WFCC…ALLL), 288–308 (LAPP…TIIA), 345–365 (IYIP…VAGF), 370–390 (GLAA…ALLV), 402–422 (PLAV…FFGA), and 427–447 (VGAG…VMIT).

This sequence belongs to the HAK/KUP transporter (TC 2.A.72) family.

Its subcellular location is the cell inner membrane. It carries out the reaction K(+)(in) + H(+)(in) = K(+)(out) + H(+)(out). Transport of potassium into the cell. Likely operates as a K(+):H(+) symporter. This chain is Probable potassium transport system protein Kup 1, found in Geobacter sulfurreducens (strain ATCC 51573 / DSM 12127 / PCA).